Here is a 498-residue protein sequence, read N- to C-terminus: UDP-N-acetylmuramate--L-alanine ligase (498 aa).

120-126 (GSHGKTT) lines the ATP pocket.

It belongs to the MurCDEF family.

It localises to the cytoplasm. It catalyses the reaction UDP-N-acetyl-alpha-D-muramate + L-alanine + ATP = UDP-N-acetyl-alpha-D-muramoyl-L-alanine + ADP + phosphate + H(+). The protein operates within cell wall biogenesis; peptidoglycan biosynthesis. Functionally, cell wall formation. The chain is UDP-N-acetylmuramate--L-alanine ligase from Rickettsia typhi (strain ATCC VR-144 / Wilmington).